We begin with the raw amino-acid sequence, 177 residues long: Large ribosomal subunit protein uL6 (177 aa).

It belongs to the universal ribosomal protein uL6 family. In terms of assembly, part of the 50S ribosomal subunit.

In terms of biological role, this protein binds to the 23S rRNA, and is important in its secondary structure. It is located near the subunit interface in the base of the L7/L12 stalk, and near the tRNA binding site of the peptidyltransferase center. The sequence is that of Large ribosomal subunit protein uL6 from Methylobacterium sp. (strain 4-46).